We begin with the raw amino-acid sequence, 546 residues long: Low-affinity methionine permease (546 aa).

At 1-70 (MEPLLFNSGK…QGRHLGVFST (70 aa)) the chain is on the extracellular side. The helical transmembrane segment at 71-91 (VVLFVSRIMGSGIFAVPSVIL) threads the bilayer. Residues 92–98 (LNTGGNK) lie on the Cytoplasmic side of the membrane. A helical membrane pass occupies residues 99-119 (LIYFAIWVFSAAIAFAGLYLF). The Extracellular portion of the chain corresponds to 120 to 148 (LEFGSWIPKSGGRKNFLERSFERPRLLIS). The helical transmembrane segment at 149–169 (VVFSCYSVLTGYALTGSIVFG) threads the bilayer. Residues 170–188 (KYVLSAFGVTDDSWSKYVS) are Cytoplasmic-facing. A helical membrane pass occupies residues 189–209 (ISFIIFAVLIHGVSVRHGVFI). At 210 to 213 (QNAL) the chain is on the extracellular side. A helical membrane pass occupies residues 214 to 234 (GGLKLIMIVLMCFAGLYTLFF). Residues 235–254 (YKSTGQVAWDLPVTQVEKDS) are Cytoplasmic-facing. Residues 255-275 (LLSVSSIATAFISSFFCFSGW) form a helical membrane-spanning segment. Over 276–297 (DTVHTVTSEIKNPVKTLKVSGP) the chain is Extracellular. A helical membrane pass occupies residues 298 to 318 (LSLIICFVCYTMMNVAYLKVL). Residue Thr-319 is a topological domain, cytoplasmic. The chain crosses the membrane as a helical span at residues 320–340 (YEEIVSAGPLVGSVLFTKLFG). At 341 to 346 (PRVGGK) the chain is on the extracellular side. The chain crosses the membrane as a helical span at residues 347–367 (FIAFSIAISAASNILVVIYSI). At 368 to 393 (SRVNQEIFKEGYLPFSIHMSKNWPFD) the chain is on the cytoplasmic side. Residues 394-414 (APLPSISLCGFITIAWILILP) form a helical membrane-spanning segment. The Extracellular portion of the chain corresponds to 415–423 (KEGESFNYL). A helical membrane pass occupies residues 424–444 (VSMDGYGNQFFLLLVAIGLFI). Over 445–459 (WRFKHKNEVPEIRAS) the chain is Cytoplasmic. The chain crosses the membrane as a helical span at residues 460 to 480 (TFGVLAIITLSLYMLMAPFFA). Over 481-494 (DPSLNRVGFLPPYQ) the chain is Extracellular. The helical transmembrane segment at 495-515 (IMSLLVIVACFFFWLVKFVLL) threads the bilayer. Residues 516–546 (PKFFHYKLLPKITYLHDGLIVTEWVKKPCLC) lie on the Cytoplasmic side of the membrane.

This sequence to yeast high affinity methionine permease (MUP1).

It localises to the membrane. Functionally, very low affinity permease for methionine. This is Low-affinity methionine permease (MUP3) from Saccharomyces cerevisiae (strain ATCC 204508 / S288c) (Baker's yeast).